A 382-amino-acid polypeptide reads, in one-letter code: Hyaluronidase (382 aa).

Positions M1–G28 form a signal peptide, or 24. The propeptide occupies F29–T33. Disulfide bonds link C54–C345 and C221–C233. The N-linked (GlcNAc...) asparagine glycan is linked to N115. The active-site Proton donor is the E145. N-linked (GlcNAc...) (complex) asparagine glycosylation occurs at N263.

The protein belongs to the glycosyl hydrolase 56 family. As to quaternary structure, homotetramer. Post-translationally, N-glycosylated. Glycans found include a majority of small oligosaccharides (Man1-3GlcNAc2), most of which are either alpha 1,3-monofucosylated or alpha 1,3-(alpha 1,6-)difucosylated at the innermost GlcNAc residue, approximately 5% of high-mannose type structures, and 8% contains the terminal trisaccharide GalNAc beta 1-4[Fuc alpha 1-3]GlcNAc beta 1-in beta 1,2-linkage to the core alpha 1,3-mannosyl residue. In terms of tissue distribution, expressed in the venom glands of worker bees. It is also detected in the testes of drones but not in the queen-bee venom glands or in pupae.

The protein localises to the secreted. It catalyses the reaction Random hydrolysis of (1-&gt;4)-linkages between N-acetyl-beta-D-glucosamine and D-glucuronate residues in hyaluronate.. In terms of biological role, hydrolyzes high molecular weight hyaluronic acid to produce small oligosaccharides. In Apis mellifera (Honeybee), this protein is Hyaluronidase.